Here is a 234-residue protein sequence, read N- to C-terminus: LexA repressor (234 aa).

A DNA-binding region (H-T-H motif) is located at residues 41–61 (RAEIAAELGFRSPNAAEEHLK). Active-site for autocatalytic cleavage activity residues include Ser152 and Lys189.

This sequence belongs to the peptidase S24 family. As to quaternary structure, homodimer.

It catalyses the reaction Hydrolysis of Ala-|-Gly bond in repressor LexA.. In terms of biological role, represses a number of genes involved in the response to DNA damage (SOS response), including recA and lexA. In the presence of single-stranded DNA, RecA interacts with LexA causing an autocatalytic cleavage which disrupts the DNA-binding part of LexA, leading to derepression of the SOS regulon and eventually DNA repair. The sequence is that of LexA repressor from Polaromonas naphthalenivorans (strain CJ2).